The sequence spans 503 residues: Long-chain-aldehyde dehydrogenase (503 aa).

218–224 is an NAD(+) binding site; it reads GYGAEVG. Catalysis depends on residues Glu-262 and Cys-301.

It belongs to the aldehyde dehydrogenase family. As to quaternary structure, homotetramer.

It catalyses the reaction a long-chain fatty aldehyde + NAD(+) + H2O = a long-chain fatty acid + NADH + 2 H(+). With respect to regulation, completely inhibited by p-chloromercuribenzoate and N-ethylmaleimide. Strongly inhibited by iodoacetate. Inhibited by Pb(2+), Fe(3+), Ag(+) and Hg(2+) and partially inhibited by several other metal ions Mn(2+), Zn(2+) and Cu(2+). Aldehyde dehydrogenase that shows activity toward n-alkanals (C(4) to C(14)), with a preference for longer carbon chains. The best substrate is tetradecanal. This chain is Long-chain-aldehyde dehydrogenase (ald1), found in Acinetobacter sp.